Consider the following 1174-residue polypeptide: Nucleolar complex protein 1 (1174 aa).

Disordered regions lie at residues 1–20 (MPAA…NKKI), 29–237 (VVKQ…EESQ), 715–742 (YEDV…VKSS), 893–922 (AQNK…LKEG), 944–1085 (GVDE…GGRS), and 1116–1174 (VKGQ…KRKH). The span at 33–63 (NKKEHPQRPKFEGKEQVKKPQKIKFGEDGKA) shows a compositional bias: basic and acidic residues. The span at 95-104 (ASKSFNQNHK) shows a compositional bias: polar residues. Composition is skewed to basic and acidic residues over residues 113-122 (KFGEDREAVH) and 176-200 (KFGD…EDGA). Acidic residues-rich tracts occupy residues 207 to 216 (SDGDSDEELG) and 715 to 724 (YEDVKDEADD). 2 stretches are compositionally biased toward basic and acidic residues: residues 725-739 (TKDS…DNDV) and 897-906 (KQKEIKKDAA). Composition is skewed to acidic residues over residues 907–916 (EEGDDGEAGE), 945–954 (VDEEQDEEEL), 981–1038 (AEDE…DEGS), and 1048–1065 (DSSD…DDED). A compositionally biased stretch (basic and acidic residues) spans 1127 to 1143 (NKDKSSDKQLKWEENRR). Residues 1156–1166 (GKPAAKGGRPQ) are compositionally biased toward low complexity.

Belongs to the CBF/MAK21 family.

Its subcellular location is the nucleus. It is found in the nucleolus. Involved in rRNA processing and ribosome maturation. May also act as a transcription factor. The chain is Nucleolar complex protein 1 from Drosophila melanogaster (Fruit fly).